The sequence spans 51 residues: Large ribosomal subunit protein bL33 (51 aa).

The protein belongs to the bacterial ribosomal protein bL33 family.

This chain is Large ribosomal subunit protein bL33, found in Nitrosospira multiformis (strain ATCC 25196 / NCIMB 11849 / C 71).